A 145-amino-acid chain; its full sequence is MIALIQRVTQAKVDVDGKTIGAIDKGLLVLLGVEREDDSFKMEKLANKVMSYRVFSDENGKMNLNVSQAGGALLVVSQFTLAADTGRGLRPSFSGAGTPDQAKVLYEEFVAFCRAKGMPTQTGEFAADMQVSLVNDGPVTFNLQV.

The short motif at 137–138 (GP) is the Gly-cisPro motif, important for rejection of L-amino acids element.

Belongs to the DTD family. Homodimer.

It is found in the cytoplasm. It catalyses the reaction glycyl-tRNA(Ala) + H2O = tRNA(Ala) + glycine + H(+). The enzyme catalyses a D-aminoacyl-tRNA + H2O = a tRNA + a D-alpha-amino acid + H(+). An aminoacyl-tRNA editing enzyme that deacylates mischarged D-aminoacyl-tRNAs. Also deacylates mischarged glycyl-tRNA(Ala), protecting cells against glycine mischarging by AlaRS. Acts via tRNA-based rather than protein-based catalysis; rejects L-amino acids rather than detecting D-amino acids in the active site. By recycling D-aminoacyl-tRNA to D-amino acids and free tRNA molecules, this enzyme counteracts the toxicity associated with the formation of D-aminoacyl-tRNA entities in vivo and helps enforce protein L-homochirality. This is D-aminoacyl-tRNA deacylase from Shewanella sediminis (strain HAW-EB3).